The chain runs to 218 residues: Cytochrome c biogenesis ATP-binding export protein CcmA (218 aa).

The ABC transporter domain occupies 2-217 (LEAKNLTCIR…KSCLSACCAV (216 aa)). Residue 34–41 (GPNGAGKT) participates in ATP binding.

Belongs to the ABC transporter superfamily. CcmA exporter (TC 3.A.1.107) family. In terms of assembly, the complex is composed of two ATP-binding proteins (CcmA) and two transmembrane proteins (CcmB).

The protein resides in the cell inner membrane. It carries out the reaction heme b(in) + ATP + H2O = heme b(out) + ADP + phosphate + H(+). Its function is as follows. Part of the ABC transporter complex CcmAB involved in the biogenesis of c-type cytochromes; once thought to export heme, this seems not to be the case, but its exact role is uncertain. Responsible for energy coupling to the transport system. This chain is Cytochrome c biogenesis ATP-binding export protein CcmA, found in Yersinia pestis.